The primary structure comprises 501 residues: Ribose import ATP-binding protein RbsA (501 aa).

2 consecutive ABC transporter domains span residues 6-242 (LQLS…VGRK) and 253-495 (VHGQ…VGKK). 38-45 (GENGAGKS) is an ATP binding site.

It belongs to the ABC transporter superfamily. Ribose importer (TC 3.A.1.2.1) family. The complex is composed of an ATP-binding protein (RbsA), two transmembrane proteins (RbsC) and a solute-binding protein (RbsB).

It localises to the cell inner membrane. It catalyses the reaction D-ribose(out) + ATP + H2O = D-ribose(in) + ADP + phosphate + H(+). Its function is as follows. Part of the ABC transporter complex RbsABC involved in ribose import. Responsible for energy coupling to the transport system. The sequence is that of Ribose import ATP-binding protein RbsA from Vibrio vulnificus (strain YJ016).